Consider the following 75-residue polypeptide: Theromacin (75 aa).

Cystine bridges form between C2–C9, C24–C28, C31–C73, C39–C47, and C57–C59.

This sequence belongs to the macin family.

The protein localises to the secreted. Has a bactericial activity. This chain is Theromacin, found in Hirudo medicinalis (Medicinal leech).